The sequence spans 183 residues: Putative calmodulin-like protein 2 (183 aa).

4 EF-hand domains span residues 7-42 (EQIA…LGQS), 43-78 (PTEA…KLRD), 80-115 (GAED…LGDP), and 116-151 (LSDD…KRRQ). The Ca(2+) site is built by Asp-20, Asp-22, Asp-24, Thr-26, Glu-31, Asp-56, Asp-58, Ser-60, Ser-62, Glu-67, Asp-93, Asp-95, Asn-97, Glu-104, Asp-129, Asp-131, Asp-133, Gln-135, and Glu-140. Residues 154–183 (MEGHGSGGHRSSNSHKKSGCCGPNSSCTIL) are disordered. S-palmitoyl cysteine attachment occurs at residues Cys-173 and Cys-174. Cys-180 bears the Cysteine methyl ester mark. Cys-180 is lipidated: S-farnesyl cysteine. A propeptide spans 181–183 (TIL) (removed in mature form).

This sequence belongs to the calmodulin family.

It localises to the membrane. Its function is as follows. Potential calcium sensor. This is Putative calmodulin-like protein 2 (CML2) from Oryza sativa subsp. japonica (Rice).